An 82-amino-acid chain; its full sequence is Small ribosomal subunit protein uS17 (82 aa).

It belongs to the universal ribosomal protein uS17 family. As to quaternary structure, part of the 30S ribosomal subunit.

Functionally, one of the primary rRNA binding proteins, it binds specifically to the 5'-end of 16S ribosomal RNA. This Ehrlichia ruminantium (strain Gardel) protein is Small ribosomal subunit protein uS17.